A 398-amino-acid polypeptide reads, in one-letter code: Probable peptidoglycan glycosyltransferase FtsW (398 aa).

Topologically, residues 1-25 are cytoplasmic; it reads MCYGGTAMMAFADIKEALTPKPSAQ. A helical membrane pass occupies residues 26-46; sequence LYDVPLLYCMLMLMGVGFVMV. The Periplasmic portion of the chain corresponds to 47–69; it reads TSASMPTADRLFGNIYHFTIRHG. The helical transmembrane segment at 70-90 threads the bilayer; the sequence is IFLALSFCLFWITTSVPMSWW. Lysine 91 is a topological domain (cytoplasmic). Residues 92-112 traverse the membrane as a helical segment; that stretch reads KANPYLLLVGLGLLLIVLIVG. Over 113-120 the chain is Periplasmic; it reads REVNGSTR. Residues 121–141 form a helical membrane-spanning segment; the sequence is WIPIGPFNIQASELAKLFFFS. Residues 142–156 are Cytoplasmic-facing; the sequence is YISGYLVRKRSEVQE. Residues 157–177 traverse the membrane as a helical segment; that stretch reads NIKGFIKPILVFAAYAGLILM. Residues 178–179 lie on the Periplasmic side of the membrane; that stretch reads QP. The chain crosses the membrane as a helical span at residues 180–200; sequence DLGTVVVMFVTTVGLLFLAGA. Position 201 (lysine 201) is a topological domain, cytoplasmic. The chain crosses the membrane as a helical span at residues 202–222; the sequence is LWQFFVLILTGVALVIGLIVL. Residues 223 to 289 are Periplasmic-facing; sequence EPYRMARVIG…DFIFAVIAEE (67 aa). Residues 290–312 traverse the membrane as a helical segment; the sequence is LGFVGVSSILIVLGTLVFRALLI. Over 313–324 the chain is Cytoplasmic; the sequence is GQNALKNGKEYE. A helical membrane pass occupies residues 325 to 345; the sequence is GYLALAIGIWFAFQTMVNVGA. Residues 346 to 356 lie on the Periplasmic side of the membrane; it reads SAGILPTKGLT. A helical membrane pass occupies residues 357–377; sequence LPFISYGGSSLLMMTIAAGIL. Topologically, residues 378-398 are cytoplasmic; it reads LRVDFETKMATKQATSGGAKR.

This sequence belongs to the SEDS family. FtsW subfamily.

The protein resides in the cell inner membrane. It carries out the reaction [GlcNAc-(1-&gt;4)-Mur2Ac(oyl-L-Ala-gamma-D-Glu-L-Lys-D-Ala-D-Ala)](n)-di-trans,octa-cis-undecaprenyl diphosphate + beta-D-GlcNAc-(1-&gt;4)-Mur2Ac(oyl-L-Ala-gamma-D-Glu-L-Lys-D-Ala-D-Ala)-di-trans,octa-cis-undecaprenyl diphosphate = [GlcNAc-(1-&gt;4)-Mur2Ac(oyl-L-Ala-gamma-D-Glu-L-Lys-D-Ala-D-Ala)](n+1)-di-trans,octa-cis-undecaprenyl diphosphate + di-trans,octa-cis-undecaprenyl diphosphate + H(+). Its pathway is cell wall biogenesis; peptidoglycan biosynthesis. Peptidoglycan polymerase that is essential for cell division. This Pseudoalteromonas translucida (strain TAC 125) protein is Probable peptidoglycan glycosyltransferase FtsW.